A 73-amino-acid chain; its full sequence is Disintegrin barbourin (73 aa).

One can recognise a Disintegrin domain in the interval 1 to 73; sequence EAGEECDCGS…ADCPRNGLYG (73 aa). 6 disulfide bridges follow: C6–C21, C8–C16, C15–C38, C29–C35, C34–C59, and C47–C66. Residues 51-53 carry the Cell attachment site; atypical (KGD) motif; sequence KGD.

Belongs to the venom metalloproteinase (M12B) family. P-II subfamily. P-IIa sub-subfamily. Monomer. As to expression, expressed by the venom gland.

The protein localises to the secreted. Functionally, inhibitor of ligand binding to the integrins alpha-IIb/beta-3 (ITGA2B/ITGB3). Competition with fibrinogen for the RGD recognition sites on the alpha-IIb/beta-3 integrin results in the inhibition of platelet aggregation induced by ADP, thrombin, platelet-activating factor and collagen. This is Disintegrin barbourin from Sistrurus miliarius barbouri (Dusky pigmy rattlesnake).